Here is a 282-residue protein sequence, read N- to C-terminus: Ammonia transport outward protein 2 (282 aa).

Residues 1 to 34 form a disordered region; the sequence is MSDREQSSGNTAFENPKALDSSEGEFISENNDQS. Serine 2 carries the N-acetylserine modification. 6 positions are modified to phosphoserine: serine 2, serine 7, serine 21, serine 22, serine 28, and serine 40. Topologically, residues 2-86 are extracellular; the sequence is SDREQSSGNT…GLAPAPVHKF (85 aa). A helical transmembrane segment spans residues 87 to 107; the sequence is ANPAPLGLSGFALTTFVLSMF. Residues 108 to 119 are Cytoplasmic-facing; sequence NARAQGITIPNV. The helical transmembrane segment at 120–140 threads the bilayer; it reads VVGCAMFYGGLVQLIAGIWEI. Residues 141-150 are Extracellular-facing; that stretch reads ALENTFGGTA. Residues 151–171 traverse the membrane as a helical segment; sequence LCSFGGFWLSFGAIYIPWFGI. Residues 172–184 are Cytoplasmic-facing; it reads LDAYKDKESDLGN. The chain crosses the membrane as a helical span at residues 185–205; it reads ALGFYLLGWALFTFGLSVCTM. Topologically, residues 206–207 are extracellular; the sequence is KS. The helical transmembrane segment at 208 to 228 threads the bilayer; sequence TIMFFALFFLLAVTFLLLSIA. The Cytoplasmic portion of the chain corresponds to 229–238; the sequence is NFTGEVGVTR. Residues 239–259 traverse the membrane as a helical segment; sequence AGGVLGVIVAFIAWYNAYAGI. At 260 to 282 the chain is on the extracellular side; that stretch reads ATRQNSYIMVHPFALPSNDKVFF.

It belongs to the acetate uptake transporter (AceTr) (TC 2.A.96) family.

Its subcellular location is the cell membrane. Its function is as follows. Transporter protein required for ammonia export. Involved in acetate resistance. The polypeptide is Ammonia transport outward protein 2 (ATO2) (Saccharomyces cerevisiae (strain ATCC 204508 / S288c) (Baker's yeast)).